The primary structure comprises 396 residues: Pectate lyase 5 (396 aa).

Positions 1–25 (MGIKHCCYILYFTLALVTLLQPVRS) are cleaved as a signal peptide. The N-linked (GlcNAc...) asparagine glycan is linked to Asn-36. Cys-53 and Cys-70 form a disulfide bridge. Asp-193, Asp-217, and Asp-221 together coordinate Ca(2+). Arg-273 is a catalytic residue.

It belongs to the polysaccharide lyase 1 family. Amb a subfamily. As to quaternary structure, monomer. It depends on Ca(2+) as a cofactor. Post-translationally, the N-terminus is blocked. Pollen and flowers.

The catalysed reaction is Eliminative cleavage of (1-&gt;4)-alpha-D-galacturonan to give oligosaccharides with 4-deoxy-alpha-D-galact-4-enuronosyl groups at their non-reducing ends.. Its pathway is glycan metabolism; pectin degradation; 2-dehydro-3-deoxy-D-gluconate from pectin: step 2/5. Has pectate lyase activity. In Ambrosia artemisiifolia (Common ragweed), this protein is Pectate lyase 5.